Here is a 523-residue protein sequence, read N- to C-terminus: Putative glucosylceramidase 1 (523 aa).

The N-terminal stretch at Met1 to Ala23 is a signal peptide. An N-linked (GlcNAc...) asparagine glycan is attached at Asn168. Catalysis depends on Glu358, which acts as the Nucleophile.

The protein belongs to the glycosyl hydrolase 30 family.

The enzyme catalyses a beta-D-glucosylceramide + H2O = an N-acyl-sphingoid base + D-glucose. The catalysed reaction is a beta-D-glucosyl-(1&lt;-&gt;1')-N-acylsphing-4-enine + H2O = an N-acylsphing-4-enine + D-glucose. It carries out the reaction an N-acyl-1-beta-D-glucosyl-15-methylhexadecasphing-4-enine + H2O = an N-acyl-15-methylhexadecasphing-4-enine + D-glucose. The protein operates within lipid metabolism; sphingolipid metabolism. Its function is as follows. Glucosylceramidase that catalyzes the hydrolysis of glucosylceramides into free ceramides and glucose. C.elegans contains specific sphingoid bases, which are unique or different in structure compared to the sphingoid bases found in other animals. Two examples of these distinctive compounds are: 15-methylhexadecasphinganine and 15-methylhexadecasphing-4-enine. In Caenorhabditis elegans, this protein is Putative glucosylceramidase 1 (gba-1).